The primary structure comprises 369 residues: tRNA(Met) cytidine acetate ligase (369 aa).

ATP-binding positions include 7–20, glycine 96, asparagine 152, and arginine 175; that span reads VAEF…HKYL.

It belongs to the TmcAL family.

It is found in the cytoplasm. It catalyses the reaction cytidine(34) in elongator tRNA(Met) + acetate + ATP = N(4)-acetylcytidine(34) in elongator tRNA(Met) + AMP + diphosphate. Its function is as follows. Catalyzes the formation of N(4)-acetylcytidine (ac(4)C) at the wobble position of elongator tRNA(Met), using acetate and ATP as substrates. First activates an acetate ion to form acetyladenylate (Ac-AMP) and then transfers the acetyl group to tRNA to form ac(4)C34. This is tRNA(Met) cytidine acetate ligase from Streptococcus agalactiae serotype Ia (strain ATCC 27591 / A909 / CDC SS700).